The chain runs to 192 residues: dTTP/UTP pyrophosphatase (192 aa).

Asp-70 functions as the Proton acceptor in the catalytic mechanism.

This sequence belongs to the Maf family. YhdE subfamily. A divalent metal cation serves as cofactor.

The protein resides in the cytoplasm. It catalyses the reaction dTTP + H2O = dTMP + diphosphate + H(+). It carries out the reaction UTP + H2O = UMP + diphosphate + H(+). In terms of biological role, nucleoside triphosphate pyrophosphatase that hydrolyzes dTTP and UTP. May have a dual role in cell division arrest and in preventing the incorporation of modified nucleotides into cellular nucleic acids. This Alkaliphilus metalliredigens (strain QYMF) protein is dTTP/UTP pyrophosphatase.